The following is a 575-amino-acid chain: Membrane protein insertase YidC (575 aa).

The next 6 helical transmembrane spans lie at 6 to 26 (VFLI…WGKD), 357 to 377 (FSIM…LHSF), 381 to 401 (WGWA…PLSA), 448 to 468 (GGCL…WVLV), 490 to 510 (PYFI…KLTP), and 526 to 546 (PLVF…YWVV).

The protein belongs to the OXA1/ALB3/YidC family. Type 1 subfamily. As to quaternary structure, interacts with the Sec translocase complex via SecD. Specifically interacts with transmembrane segments of nascent integral membrane proteins during membrane integration.

It is found in the cell inner membrane. Required for the insertion and/or proper folding and/or complex formation of integral membrane proteins into the membrane. Involved in integration of membrane proteins that insert both dependently and independently of the Sec translocase complex, as well as at least some lipoproteins. Aids folding of multispanning membrane proteins. The chain is Membrane protein insertase YidC from Xanthomonas campestris pv. campestris (strain B100).